The sequence spans 115 residues: Large ribosomal subunit protein bL20 (115 aa).

It belongs to the bacterial ribosomal protein bL20 family.

Binds directly to 23S ribosomal RNA and is necessary for the in vitro assembly process of the 50S ribosomal subunit. It is not involved in the protein synthesizing functions of that subunit. In Prochlorococcus marinus (strain MIT 9215), this protein is Large ribosomal subunit protein bL20.